A 254-amino-acid polypeptide reads, in one-letter code: MDKGKSVKSTEKSVGMPPKTPKTDNNAHVDNEFLILQVNDAVFPIGSYTHSFGLETYIQQKKVTNKESALEYLKANLSSQFLYTEMLSLKLTYESALQQDLKKILGVEEVIMLSTSPMELRLANQKLGNRFIKTLQAMNELDMGEFFNAYAQKTKDPTHATSYGVFAASLGIELKKALRHYLYAQTSNMVINCVKSVPLSQNDGQKILLSLQSPFNQLIEKTLELDESHLCTASVQNDIKAMQHESLYSRLYMS.

The span at 1-11 shows a compositional bias: basic and acidic residues; the sequence is MDKGKSVKSTE. Positions 1-26 are disordered; sequence MDKGKSVKSTEKSVGMPPKTPKTDNN.

The protein belongs to the UreF family. In terms of assembly, ureH, UreF and UreG form a complex that acts as a GTP-hydrolysis-dependent molecular chaperone, activating the urease apoprotein by helping to assemble the nickel containing metallocenter of UreC. The UreE protein probably delivers the nickel.

It localises to the cytoplasm. In terms of biological role, required for maturation of urease via the functional incorporation of the urease nickel metallocenter. The protein is Urease accessory protein UreF of Helicobacter pylori (strain ATCC 700392 / 26695) (Campylobacter pylori).